The following is a 574-amino-acid chain: VAO-type flavoprotein oxidase VAO615 (574 aa).

An N-terminal signal peptide occupies residues 1–17; the sequence is MPASLLRFLALAGTAVG. Intrachain disulfides connect Cys-28/Cys-572, Cys-64/Cys-77, Cys-108/Cys-118, and Cys-450/Cys-476. N-linked (GlcNAc...) asparagine glycosylation occurs at Asn-47. Asn-105 carries an N-linked (GlcNAc...) asparagine glycan. The region spanning 120–299 is the FAD-binding PCMH-type domain; sequence LGNYPSYVVN…LSMTARLHRD (180 aa). Asn-129, Asn-211, Asn-310, Asn-346, and Asn-438 each carry an N-linked (GlcNAc...) asparagine glycan. The 6-(S-cysteinyl)-8alpha-(pros-histidyl)-FAD (His-Cys) cross-link spans 157 to 222; that stretch reads HDYLGKSTGK…TGHRIVGGTC (66 aa).

The protein belongs to the oxygen-dependent FAD-linked oxidoreductase family. FAD is required as a cofactor. In terms of processing, the FAD cofactor is bound via a bicovalent 6-S-cysteinyl, 8alpha-N1-histidyl FAD linkage.

It localises to the secreted. Probably oxidoreductase that, when reduced, rapidly reacts with molecular oxygen, a hallmark of flavoprotein oxidases. A large panel of alcohols, including carbohydrates, steroids and secondary alcohols were tested as potential substrates, but none has been identified so far. The sequence is that of VAO-type flavoprotein oxidase VAO615 from Thermothelomyces thermophilus (strain ATCC 42464 / BCRC 31852 / DSM 1799) (Sporotrichum thermophile).